An 876-amino-acid polypeptide reads, in one-letter code: Serrate RNA effector molecule homolog (876 aa).

The interval 1-90 is disordered; that stretch reads MGDSDDEYDR…RRDWDEHSSD (90 aa). Gly-2 is modified (N-acetylglycine). Ser-4 is subject to Phosphoserine. Tyr-8 is modified (phosphotyrosine). Positions 8–73 are enriched in basic and acidic residues; sequence YDRRRRDKFR…ERFSPPRHEL (66 aa). A phosphoserine mark is found at Ser-67, Ser-74, and Ser-136. Lys-150 participates in a covalent cross-link: Glycyl lysine isopeptide (Lys-Gly) (interchain with G-Cter in SUMO2). Residues 272-413 form a disordered region; sequence EEEEQAGKPG…PKDAPGLECK (142 aa). Over residues 297–347 the composition is skewed to basic and acidic residues; sequence DGERKANEKDDKKEDGKQAENESSSDDKIKKSEGDGDKEEKKEDSEKEAKK. Residues 370–387 show a composition bias toward acidic residues; the sequence is SESESESGQAEEEKEEAD. Residues 388 to 413 are compositionally biased toward basic and acidic residues; the sequence is ETLKEKEKPKEEEREKPKDAPGLECK. Ser-493 is subject to Phosphoserine. Thr-544 is subject to Phosphothreonine. Ser-570 is subject to Phosphoserine. The segment at 575–597 is disordered; it reads ELLGSSGGAPPEEPPKEGNPAEI. At Thr-671 the chain carries Phosphothreonine. Ser-679 carries the post-translational modification Phosphoserine. 3 positions are modified to omega-N-methylarginine: Arg-833, Arg-840, and Arg-850. A disordered region spans residues 835–854; that stretch reads NYDAFRGQGGYPGKPRNRMV.

Belongs to the ARS2 family. Interacts with CASP8AP2, ERBB4, NCBP1/CBP80 and DROSHA. Interacts with LUZP4. Interacts with NCBP2/CBP20 and NCBP3. Interacts with MTREX.

The protein resides in the nucleus. It localises to the nucleoplasm. The protein localises to the cytoplasm. Acts as a mediator between the cap-binding complex (CBC) and the primary microRNAs (miRNAs) processing machinery during cell proliferation. Contributes to the stability and delivery of capped primary miRNA transcripts to the primary miRNA processing complex containing DGCR8 and DROSHA, thereby playing a role in RNA-mediated gene silencing (RNAi) by miRNAs. Binds capped RNAs (m7GpppG-capped RNA); however interaction is probably mediated via its interaction with NCBP1/CBP80 component of the CBC complex. Involved in cell cycle progression at S phase. Does not directly confer arsenite resistance but rather modulates arsenic sensitivity. Independently of its activity on miRNAs, necessary and sufficient to promote neural stem cell self-renewal. Does so by directly binding SOX2 promoter and positively regulating its transcription. The protein is Serrate RNA effector molecule homolog (SRRT) of Bos taurus (Bovine).